Reading from the N-terminus, the 253-residue chain is uncharacterized protein (253 aa).

This is an uncharacterized protein from Haemophilus influenzae (strain ATCC 51907 / DSM 11121 / KW20 / Rd).